A 252-amino-acid chain; its full sequence is tRNA (guanine-N(1)-)-methyltransferase (252 aa).

Residues glycine 113 and 133–138 (IGDYVL) contribute to the S-adenosyl-L-methionine site.

This sequence belongs to the RNA methyltransferase TrmD family. In terms of assembly, homodimer.

The protein localises to the cytoplasm. It carries out the reaction guanosine(37) in tRNA + S-adenosyl-L-methionine = N(1)-methylguanosine(37) in tRNA + S-adenosyl-L-homocysteine + H(+). Its function is as follows. Specifically methylates guanosine-37 in various tRNAs. This Xanthomonas campestris pv. campestris (strain 8004) protein is tRNA (guanine-N(1)-)-methyltransferase.